The chain runs to 187 residues: Capsid protein (187 aa).

A compositionally biased stretch (basic residues) spans 151-180 (RRGSARVVRSPRRRTPSPRRRRSQSPRRRP). Positions 151–187 (RRGSARVVRSPRRRTPSPRRRRSQSPRRRPQSPASNC) are disordered. 3 positions are modified to phosphoserine; by host: serine 160, serine 167, and serine 175. 3 repeat units span residues 160–164 (SPRRR), 167–171 (SPRRR), and 175–179 (SPRRR). The 3 X 5 AA repeats of S-P-R-R-R stretch occupies residues 160-179 (SPRRRTPSPRRRRSQSPRRR). Positions 163 to 180 (RRTPSPRRRRSQSPRRRP) match the Bipartite nuclear localization signal motif. The segment at 181 to 187 (QSPASNC) is RNA binding.

The protein belongs to the orthohepadnavirus core antigen family. Homodimerizes, then multimerizes. Interacts with cytosol exposed regions of viral L glycoprotein present in the reticulum-to-Golgi compartment. Interacts with human FLNB. Phosphorylated form interacts with host importin alpha; this interaction depends on the exposure of the NLS, which itself depends upon genome maturation and/or phosphorylation of the capsid protein. Interacts with host NUP153. Phosphorylated by host SRPK1, SRPK2, and maybe protein kinase C or GAPDH. Phosphorylation is critical for pregenomic RNA packaging. Protein kinase C phosphorylation is stimulated by HBx protein and may play a role in transport of the viral genome to the nucleus at the late step during the viral replication cycle.

It localises to the virion. Its subcellular location is the host cytoplasm. Functionally, self assembles to form an icosahedral capsid. Most capsids appear to be large particles with an icosahedral symmetry of T=4 and consist of 240 copies of capsid protein, though a fraction forms smaller T=3 particles consisting of 180 capsid proteins. Entering capsids are transported along microtubules to the nucleus. Phosphorylation of the capsid is thought to induce exposure of nuclear localization signal in the C-terminal portion of the capsid protein that allows binding to the nuclear pore complex via the importin (karyopherin-) alpha and beta. Capsids are imported in intact form through the nuclear pore into the nuclear basket, where it probably binds NUP153. Only capsids that contain the mature viral genome can release the viral DNA and capsid protein into the nucleoplasm. Immature capsids get stuck in the basket. Capsids encapsulate the pre-genomic RNA and the P protein. Pre-genomic RNA is reverse-transcribed into DNA while the capsid is still in the cytoplasm. The capsid can then either be directed to the nucleus, providing more genomes for transcription, or bud through the endoplasmic reticulum to provide new virions. The protein is Capsid protein of Urocitellus parryii kennicottii (ASHV).